A 2209-amino-acid chain; its full sequence is Genome polyprotein (2209 aa).

Glycine 2 carries the N-myristoyl glycine; by host lipid modification. Residues 2-1520 (GAQVSSQKVG…NINRAMTILQ (1519 aa)) lie on the Cytoplasmic side of the membrane. The interval 580–600 (GLGQMLESMIDNTVRETVGAA) is amphipathic alpha-helix. The tract at residues 599–619 (AATSRDALPNTEASGPTHSKE) is disordered. Catalysis depends on for protease 2A activity residues histidine 901 and aspartate 919. Zn(2+) contacts are provided by cysteine 936 and cysteine 938. Residue cysteine 990 is the For protease 2A activity of the active site. Cysteine 996 and histidine 998 together coordinate Zn(2+). Residues 1128–1200 (GDSWLKKFTE…HQSCPSQEHQ (73 aa)) form a membrane-binding region. Positions 1128 to 1266 (GDSWLKKFTE…SPGTGKSVAT (139 aa)) are oligomerization. An RNA-binding region spans residues 1149 to 1153 (SNKIS). The SF3 helicase domain occupies 1232 to 1388 (EHTINNYIQF…NEYSRDGKLN (157 aa)). 1256 to 1263 (GSPGTGKS) contacts ATP. 4 residues coordinate Zn(2+): cysteine 1396, cysteine 1399, cysteine 1408, and cysteine 1413. Residues 1396 to 1413 (CKNCHQPANFKRCCPLVC) form a C4-type zinc finger. Positions 1440–1447 (ERNRRSNI) are RNA-binding. The tract at residues 1451-1456 (MEALFQ) is oligomerization. The stretch at 1521 to 1536 (AVTTFAAVAGVVYVMY) is an intramembrane region. At 1537–2209 (KLFAGHQGAY…TLYRRWLDSF (673 aa)) the chain is on the cytoplasmic side. The residue at position 1546 (tyrosine 1546) is an O-(5'-phospho-RNA)-tyrosine. Tyrosine 1546 is subject to O-UMP-tyrosine; transient. The region spanning 1566 to 1744 (GPGFDYAVAM…FAAALKRSYF (179 aa)) is the Peptidase C3 domain. Catalysis depends on for protease 3C activity residues histidine 1605, glutamate 1636, and cysteine 1712. The region spanning 1975-2090 (EKLFAFDYTG…SYPHEVDASL (116 aa)) is the RdRp catalytic domain. Residues aspartate 1981 and aspartate 2076 each contribute to the Mg(2+) site.

This sequence belongs to the picornaviruses polyprotein family. As to quaternary structure, interacts with capsid protein VP1 and capsid protein VP3 to form heterotrimeric protomers. In terms of assembly, interacts with capsid protein VP0, and capsid protein VP3 to form heterotrimeric protomers. Five protomers subsequently associate to form pentamers which serve as building blocks for the capsid. Interacts with capsid protein VP2, capsid protein VP3 and capsid protein VP4 following cleavage of capsid protein VP0. Interacts with human PVR. Interacts with capsid protein VP1 and capsid protein VP3 in the mature capsid. As to quaternary structure, interacts with capsid protein VP0 and capsid protein VP1 to form heterotrimeric protomers. Five protomers subsequently associate to form pentamers which serve as building blocks for the capsid. Interacts with capsid protein VP4 in the mature capsid. Interacts with protein 2C; this interaction may be important for virion morphogenesis. In terms of assembly, interacts with capsid protein VP1 and capsid protein VP3. Homodimer. As to quaternary structure, homohexamer; forms a hexameric ring structure with 6-fold symmetry characteristic of AAA+ ATPases. Interacts (via N-terminus) with host RTN3 (via reticulon domain); this interaction is important for viral replication. Interacts with capsid protein VP3; this interaction may be important for virion morphogenesis. In terms of assembly, interacts with protein 3CD. Homodimer. Interacts with host GBF1. Interacts (via GOLD domain) with host ACBD3 (via GOLD domain); this interaction allows the formation of a viral protein 3A/ACBD3 heterotetramer with a 2:2 stoichiometry, which will stimulate the recruitment of host PI4KB in order to synthesize PI4P at the viral RNA replication sites. As to quaternary structure, interacts with RNA-directed RNA polymerase. In terms of assembly, interacts with protein 3AB and with RNA-directed RNA polymerase. Interacts with Viral protein genome-linked and with protein 3CD. Requires Mg(2+) as cofactor. In terms of processing, specific enzymatic cleavages in vivo by the viral proteases yield processing intermediates and the mature proteins. Post-translationally, myristoylation is required for the formation of pentamers during virus assembly. Further assembly of 12 pentamers and a molecule of genomic RNA generates the provirion. During virion maturation, immature virions are rendered infectious following cleavage of VP0 into VP4 and VP2. This maturation seems to be an autocatalytic event triggered by the presence of RNA in the capsid and it is followed by a conformational change infectious virion. In terms of processing, myristoylation is required during RNA encapsidation and formation of the mature virus particle. Post-translationally, VPg is uridylylated by the polymerase into VPg-pUpU. This acts as a nucleotide-peptide primer for the genomic RNA replication.

Its subcellular location is the virion. The protein localises to the host cytoplasm. It is found in the host cytoplasmic vesicle membrane. It localises to the host nucleus. The catalysed reaction is RNA(n) + a ribonucleoside 5'-triphosphate = RNA(n+1) + diphosphate. The enzyme catalyses Selective cleavage of Tyr-|-Gly bond in the picornavirus polyprotein.. It catalyses the reaction a ribonucleoside 5'-triphosphate + H2O = a ribonucleoside 5'-diphosphate + phosphate + H(+). It carries out the reaction Selective cleavage of Gln-|-Gly bond in the poliovirus polyprotein. In other picornavirus reactions Glu may be substituted for Gln, and Ser or Thr for Gly.. Its activity is regulated as follows. Replication or transcription is subject to high level of random mutations by the nucleotide analog ribavirin. Functionally, forms an icosahedral capsid of pseudo T=3 symmetry with capsid proteins VP2 and VP3. The capsid is 300 Angstroms in diameter, composed of 60 copies of each capsid protein and enclosing the viral positive strand RNA genome. Capsid protein VP1 mainly forms the vertices of the capsid. Capsid protein VP1 interacts with host cell receptor PVR to provide virion attachment to target host epithelial cells. This attachment induces virion internalization predominantly through clathrin- and caveolin-independent endocytosis in Hela cells and through caveolin-mediated endocytosis in brain microvascular endothelial cells. Tyrosine kinases are probably involved in the entry process. Virus binding to PVR induces increased junctional permeability and rearrangement of junctional proteins. Modulation of endothelial tight junctions, as well as cytolytic infection of endothelial cells themselves, may result in loss of endothelial integrity which may help the virus to reach the CNS. After binding to its receptor, the capsid undergoes conformational changes. Capsid protein VP1 N-terminus (that contains an amphipathic alpha-helix) and capsid protein VP4 are externalized. Together, they shape a pore in the host membrane through which viral genome is translocated to host cell cytoplasm. Forms an icosahedral capsid of pseudo T=3 symmetry with capsid proteins VP1 and VP3. The capsid is 300 Angstroms in diameter, composed of 60 copies of each capsid protein and enclosing the viral positive strand RNA genome. Its function is as follows. Forms an icosahedral capsid of pseudo T=3 symmetry with capsid proteins VP2 and VP1. The capsid is 300 Angstroms in diameter, composed of 60 copies of each capsid protein and enclosing the viral positive strand RNA genome. In terms of biological role, lies on the inner surface of the capsid shell. After binding to the host receptor, the capsid undergoes conformational changes. Capsid protein VP4 is released, Capsid protein VP1 N-terminus is externalized, and together, they shape a pore in the host membrane through which the viral genome is translocated into the host cell cytoplasm. Functionally, component of immature procapsids, which is cleaved into capsid proteins VP4 and VP2 after maturation. Allows the capsid to remain inactive before the maturation step. Cysteine protease that cleaves viral polyprotein and specific host proteins. It is responsible for the autocatalytic cleavage between the P1 and P2 regions, which is the first cleavage occurring in the polyprotein. Also cleaves the host translation initiation factor EIF4G1, in order to shut down the capped cellular mRNA translation. Inhibits the host nucleus-cytoplasm protein and RNA trafficking by cleaving host members of the nuclear pores including NUP98, NUP62 and NUP153. Counteracts stress granule formation probably by antagonizing its assembly or promoting its dissassembly. Cleaves and inhibits host IFIH1/MDA5, thereby inhibiting the type-I IFN production and the establishment of the antiviral state. Cleaves and inhibits host MAVS, thereby inhibiting the type-I IFN production and the establishment of the antiviral state. Its function is as follows. Plays an essential role in the virus replication cycle by acting as a viroporin. Creates a pore in the host endoplasmic reticulum and as a consequence releases Ca2+ in the cytoplasm of infected cell. In turn, high levels of cytoplasmic calcium may trigger membrane trafficking and transport of viral ER-associated proteins to viroplasms, sites of viral genome replication. In terms of biological role, induces and associates with structural rearrangements of intracellular membranes. Displays RNA-binding, nucleotide binding and NTPase activities. May play a role in virion morphogenesis and viral RNA encapsidation by interacting with the capsid protein VP3. Functionally, localizes the viral replication complex to the surface of membranous vesicles. Together with protein 3CD binds the Cis-Active RNA Element (CRE) which is involved in RNA synthesis initiation. Acts as a cofactor to stimulate the activity of 3D polymerase, maybe through a nucleid acid chaperone activity. Localizes the viral replication complex to the surface of membranous vesicles. It inhibits host cell endoplasmic reticulum-to-Golgi apparatus transport and causes the disassembly of the Golgi complex, possibly through GBF1 interaction. This would result in depletion of MHC, trail receptors and IFN receptors at the host cell surface. Plays an essential role in viral RNA replication by recruiting ACBD3 and PI4KB at the viral replication sites, thereby allowing the formation of the rearranged membranous structures where viral replication takes place. Its function is as follows. Acts as a primer for viral RNA replication and remains covalently bound to viral genomic RNA. VPg is uridylylated prior to priming replication into VPg-pUpU. The oriI viral genomic sequence may act as a template for this. The VPg-pUpU is then used as primer on the genomic RNA poly(A) by the RNA-dependent RNA polymerase to replicate the viral genome. During genome replication, the VPg-RNA linkage is removed by the host TDP2, thereby accelerating replication. During the late stage of the replication cycle, host TDP2 is excluded from sites of viral RNA synthesis and encapsidation, allowing for the generation of progeny virions. In terms of biological role, involved in the viral replication complex and viral polypeptide maturation. It exhibits protease activity with a specificity and catalytic efficiency that is different from protease 3C. Protein 3CD binds to the 5'UTR of the viral genome. Functionally, major viral protease that mediates proteolytic processing of the polyprotein. Cleaves host EIF5B, contributing to host translation shutoff. Cleaves also host PABPC1, contributing to host translation shutoff. Cleaves host RIGI and thus contributes to the inhibition of type I interferon production. Cleaves host NLRP1, triggers host N-glycine-mediated degradation of the autoinhibitory NLRP1 N-terminal fragment. Inhibits the integrated stress response (ISR) in the infected cell by cleaving host G3BP1. Stress granule formation is thus inhibited, which allows protein synthesis and viral replication. Replicates the viral genomic RNA on the surface of intracellular membranes. May form linear arrays of subunits that propagate along a strong head-to-tail interaction called interface-I. Covalently attaches UMP to a tyrosine of VPg, which is used to prime RNA synthesis. The positive stranded RNA genome is first replicated at virus induced membranous vesicles, creating a dsRNA genomic replication form. This dsRNA is then used as template to synthesize positive stranded RNA genomes. ss(+)RNA genomes are either translated, replicated or encapsidated. In Homo sapiens (Human), this protein is Genome polyprotein.